The sequence spans 251 residues: UPF0309 protein SCO4393 (251 aa).

Residues 36–220 (LADTVQNGGR…AATLADRGIE (185 aa)) form the SIS domain.

The protein belongs to the UPF0309 family.

The polypeptide is UPF0309 protein SCO4393 (Streptomyces coelicolor (strain ATCC BAA-471 / A3(2) / M145)).